A 127-amino-acid chain; its full sequence is Multiple antibiotic resistance protein MarA (127 aa).

The 99-residue stretch at 12 to 110 folds into the HTH araC/xylS-type domain; that stretch reads HSILDWIEDN…DVPPHKYRMT (99 aa). DNA-binding regions (H-T-H motif) lie at residues 29–50 and 77–100; these read EKVS…KKET and ILYL…KNYF.

Monomer.

Functionally, may be a transcriptional activator of genes involved in the multiple antibiotic resistance (Mar) phenotype. It can also activate genes such as sodA, zwf and micF. The protein is Multiple antibiotic resistance protein MarA (marA) of Escherichia coli (strain K12).